Consider the following 238-residue polypeptide: Ribitol-5-phosphate cytidylyltransferase (238 aa).

CTP is bound by residues 7 to 10 and 81 to 87; these read LAGG and GDDRNHT.

This sequence belongs to the IspD/TarI cytidylyltransferase family. TarI subfamily.

The enzyme catalyses D-ribitol 5-phosphate + CTP + H(+) = CDP-L-ribitol + diphosphate. The protein operates within cell wall biogenesis; poly(ribitol phosphate) teichoic acid biosynthesis. Its function is as follows. Catalyzes the transfer of the cytidylyl group of CTP to D-ribitol 5-phosphate. This is Ribitol-5-phosphate cytidylyltransferase from Staphylococcus epidermidis (strain ATCC 35984 / DSM 28319 / BCRC 17069 / CCUG 31568 / BM 3577 / RP62A).